The chain runs to 391 residues: PPE family protein PPE15 (391 aa).

Residues 312-367 (LGEATLVGRLSVPAAWSTAAPATTAGATALEGSGWTVAAEEAGPVTGMMPGMASAA) are eukaryotic-like SH3 domain.

Belongs to the mycobacterial PPE family. Forms a heterodimer with PE8. The dimer forms a 1:1:1 heterotrimeric complex with EspG5. PPE15 interacts directly with EspG5. Interacts via the C-terminal region with host Toll-like receptor 4 (TLR4). Interacts, also via the C-terminal region, with two cytosolic subunits of the host NOX complex, p47phox (NCF1) and p67phox (NCF2).

Its subcellular location is the secreted. The protein resides in the host mitochondrion. Its function is as follows. May play a critical role in the homeostasis of triacylglycerol-containing lipid droplets in M.tuberculosis and influence the entry of the pathogen into a dormant state. Is recognized by host TLR4 receptor at the macrophage cell surface, which modulates the host immune response, induces mitochondrial stress and perturbations, and induces macrophage apoptosis leading to pathogen persistence. Also downregulates NOX-mediated reactive oxygen species (ROS) generation in THP1 macrophages, which increases intracellular survival of bacteria. PPE15 interacts with two subunits of the host NADPH oxidase (NOX) complex in the cytosol of macrophages and prevents their migration to the membrane, which inhibits the assembly of the NOX complex at the plasma membrane of THP1 macrophages. This leads to reduced NOX activity and diminished ROS generation. This is PPE family protein PPE15 (PPE15) from Mycobacterium tuberculosis (strain CDC 1551 / Oshkosh).